The sequence spans 394 residues: Acid ceramidase (394 aa).

An N-terminal signal peptide occupies residues 1–18 (MRGQSLLTWVLAAAVTCA). A disulfide bond links Cys-30 and Cys-339. Cys-142 (nucleophile) is an active-site residue. 5 N-linked (GlcNAc...) asparagine glycosylation sites follow: Asn-172, Asn-194, Asn-258, Asn-341, and Asn-347. Cys-387 and Cys-391 are joined by a disulfide.

The protein belongs to the acid ceramidase family. In terms of assembly, heterodimer; disulfide-linked. The heterodimer is composed of the disulfide-linked alpha and beta chains produced by autocatalytic cleavage of the precursor. N-glycosylated. In terms of processing, proteolytically cleaved into two chains alpha and beta that remain associated via a disulfide bond. Cleavage gives rise to a conformation change that activates the enzyme. The same catalytic Cys residue mediates the autoproteolytic cleavage and subsequent hydrolysis of lipid substrates. The beta chain may undergo an additional C-terminal processing. Widely expressed.

It is found in the lysosome. The protein resides in the secreted. It catalyses the reaction an N-acylsphing-4-enine + H2O = sphing-4-enine + a fatty acid. It carries out the reaction N-dodecanoylsphing-4-enine + H2O = dodecanoate + sphing-4-enine. The enzyme catalyses N-(9Z-octadecenoyl)-sphing-4-enine + H2O = sphing-4-enine + (9Z)-octadecenoate. The catalysed reaction is N-tetradecanoylsphing-4-enine + H2O = tetradecanoate + sphing-4-enine. It catalyses the reaction N-hexadecanoylsphing-4-enine + H2O = sphing-4-enine + hexadecanoate. It carries out the reaction N-octadecanoylsphing-4-enine + H2O = sphing-4-enine + octadecanoate. The enzyme catalyses N-dodecanoyl-(4R)-hydroxysphinganine + H2O = (4R)-hydroxysphinganine + dodecanoate. The catalysed reaction is N-(dodecanoyl)-sphinganine + H2O = dodecanoate + sphinganine. It catalyses the reaction N-(acetyl)-sphing-4-enine + H2O = sphing-4-enine + acetate. It carries out the reaction N-(hexanoyl)sphing-4-enine + H2O = hexanoate + sphing-4-enine. The enzyme catalyses N-octanoylsphing-4-enine + H2O = octanoate + sphing-4-enine. The catalysed reaction is N-dodecanoylethanolamine + H2O = dodecanoate + ethanolamine. It functions in the pathway lipid metabolism; sphingolipid metabolism. Its function is as follows. Lysosomal ceramidase that hydrolyzes sphingolipid ceramides into sphingosine and free fatty acids at acidic pH. Ceramides, sphingosine, and its phosphorylated form sphingosine-1-phosphate are bioactive lipids that mediate cellular signaling pathways regulating several biological processes including cell proliferation, apoptosis and differentiation. Has a higher catalytic efficiency towards C12-ceramides versus other ceramides. Also catalyzes the reverse reaction allowing the synthesis of ceramides from fatty acids and sphingosine. For the reverse synthetic reaction, the natural sphingosine D-erythro isomer is more efficiently utilized as a substrate compared to D-erythro-dihydrosphingosine and D-erythro-phytosphingosine, while the fatty acids with chain lengths of 12 or 14 carbons are the most efficiently used. Also has an N-acylethanolamine hydrolase activity. By regulating the levels of ceramides, sphingosine and sphingosine-1-phosphate in the epidermis, mediates the calcium-induced differentiation of epidermal keratinocytes. Also indirectly regulates tumor necrosis factor/TNF-induced apoptosis. By regulating the intracellular balance between ceramides and sphingosine, in adrenocortical cells, probably also acts as a regulator of steroidogenesis. This chain is Acid ceramidase, found in Mus musculus (Mouse).